The chain runs to 194 residues: Troponin I 4 (194 aa).

The disordered stretch occupies residues 1–27 (MSDVDADEARKMAERERKKEEVRKRLE). A compositionally biased stretch (basic and acidic residues) spans 7-27 (DEARKMAERERKKEEVRKRLE).

Belongs to the troponin I family. In terms of tissue distribution, expression is detected only in pharyngeal muscle cells from embryos to adults.

In terms of biological role, troponin I is the inhibitory subunit of troponin, the thin filament regulatory complex which confers calcium-sensitivity to muscle actomyosin ATPase activity. The protein is Troponin I 4 (tni-4) of Caenorhabditis elegans.